A 90-amino-acid polypeptide reads, in one-letter code: MEASSRVTVQVLLLALVVQVTLSQHWSYGWLPGGKRSVGELEATIRMMGTGGVVSLPEEASAQTQERLRPYNVIKDDSSHFDRKKRFPNK.

Residues 1–23 (MEASSRVTVQVLLLALVVQVTLS) form the signal peptide. Gln24 is modified (pyrrolidone carboxylic acid). Gly33 is subject to Glycine amide.

This sequence belongs to the GnRH family.

The protein resides in the secreted. Functionally, stimulates the secretion of gonadotropins. This is Progonadoliberin-3 (gnrh3) from Pagrus major (Red sea bream).